The chain runs to 78 residues: Acyl carrier protein (78 aa).

The Carrier domain maps to 2-77 (SSIEERVKKI…LAIDYINANL (76 aa)). S37 is modified (O-(pantetheine 4'-phosphoryl)serine).

Belongs to the acyl carrier protein (ACP) family. In terms of processing, 4'-phosphopantetheine is transferred from CoA to a specific serine of apo-ACP by AcpS. This modification is essential for activity because fatty acids are bound in thioester linkage to the sulfhydryl of the prosthetic group.

It localises to the cytoplasm. It participates in lipid metabolism; fatty acid biosynthesis. Carrier of the growing fatty acid chain in fatty acid biosynthesis. The protein is Acyl carrier protein of Cellvibrio japonicus (strain Ueda107) (Pseudomonas fluorescens subsp. cellulosa).